Here is a 451-residue protein sequence, read N- to C-terminus: Chromosomal replication initiator protein DnaA (451 aa).

Residues 1–77 (MTENEQIFWN…EVYNAQISVD (77 aa)) are domain I, interacts with DnaA modulators. Residues 77 to 110 (DYVFEEDLMIEQNQTKINQKPKQQALNSLPTVTS) form a domain II region. The domain III, AAA+ region stretch occupies residues 111-329 (DLNSKYSFEN…GALKDISLVA (219 aa)). 4 residues coordinate ATP: glycine 155, glycine 157, lysine 158, and threonine 159. A domain IV, binds dsDNA region spans residues 330 to 451 (NFKQIDTITV…EIETIKNKIK (122 aa)).

The protein belongs to the DnaA family. As to quaternary structure, oligomerizes as a right-handed, spiral filament on DNA at oriC.

Its subcellular location is the cytoplasm. Plays an essential role in the initiation and regulation of chromosomal replication. ATP-DnaA binds to the origin of replication (oriC) to initiate formation of the DNA replication initiation complex once per cell cycle. Binds the DnaA box (a 9 base pair repeat at the origin) and separates the double-stranded (ds)DNA. Forms a right-handed helical filament on oriC DNA; dsDNA binds to the exterior of the filament while single-stranded (ss)DNA is stabiized in the filament's interior. The ATP-DnaA-oriC complex binds and stabilizes one strand of the AT-rich DNA unwinding element (DUE), permitting loading of DNA polymerase. After initiation quickly degrades to an ADP-DnaA complex that is not apt for DNA replication. Binds acidic phospholipids. Its function is as follows. The half-life of ATP-DnaA is 12 minutes at 37 degrees Celsius, in E.coli the half-life is about 41 minutes. This Streptococcus pyogenes serotype M1 protein is Chromosomal replication initiator protein DnaA.